Reading from the N-terminus, the 173-residue chain is Protein tyrosine phosphatase type IVA 3 (173 aa).

The Tyrosine-protein phosphatase domain maps to 8–161; sequence APVEVSYKHM…YRPKQRLRFK (154 aa). Cysteines 49 and 104 form a disulfide. The Proton donor role is filled by aspartate 72. The active-site Phosphocysteine intermediate is cysteine 104. Arginine 110 serves as a coordination point for substrate. Cysteine methyl ester is present on cysteine 170. Cysteine 170 is lipidated: S-farnesyl cysteine. Residues 171 to 173 constitute a propeptide, removed in mature form; the sequence is CVM.

The protein belongs to the protein-tyrosine phosphatase family. As to quaternary structure, interacts with tubulin. Post-translationally, farnesylated. Farnesylation is required for membrane targeting. Mainly expressed in cardiomyocytes and skeletal muscle; also found in pancreas. Consistently overexpressed in colon cancer metastasis.

It localises to the cell membrane. Its subcellular location is the early endosome. It catalyses the reaction O-phospho-L-tyrosyl-[protein] + H2O = L-tyrosyl-[protein] + phosphate. Its activity is regulated as follows. Inhibited by sodium orthovanadate and peroxovanadium compounds, and by pentamidine. Functionally, protein tyrosine phosphatase which stimulates progression from G1 into S phase during mitosis. Enhances cell proliferation, cell motility and invasive activity, and promotes cancer metastasis. May be involved in the progression of cardiac hypertrophy by inhibiting intracellular calcium mobilization in response to angiotensin II. The chain is Protein tyrosine phosphatase type IVA 3 (PTP4A3) from Homo sapiens (Human).